A 68-amino-acid polypeptide reads, in one-letter code: Sperm-associated antigen 11A (68 aa).

The N-terminal stretch at Met1 to Gly19 is a signal peptide. Cystine bridges form between Cys30-Cys59, Cys37-Cys52, and Cys42-Cys60.

The protein belongs to the beta-defensin family. In terms of tissue distribution, only expressed in epididymis (middle part of the caput).

Its subcellular location is the secreted. Functionally, has antimicrobial activity against E.coli. Plays a role in the defense response in the male reproductive tract, contributing to sperm maturation, storage and protection. The protein is Sperm-associated antigen 11A of Rattus norvegicus (Rat).